We begin with the raw amino-acid sequence, 199 residues long: Mediator of RNA polymerase II transcription subunit 29 (199 aa).

A compositionally biased stretch (low complexity) spans 1–17 (MAAPQPQAAAVSSASGV). The tract at residues 1 to 47 (MAAPQPQAAAVSSASGVSGPGSAGGPGPQQQPQPTQLVGSAQSGLLQ) is disordered. Ala2 carries the N-acetylalanine modification. The segment covering 18-27 (SGPGSAGGPG) has biased composition (gly residues). The segment covering 28 to 47 (PQQQPQPTQLVGSAQSGLLQ) has biased composition (low complexity).

It belongs to the Mediator complex subunit 29 family. In terms of assembly, component of the Mediator complex, which is composed of MED1, MED4, MED6, MED7, MED8, MED9, MED10, MED11, MED12, MED13, MED13L, MED14, MED15, MED16, MED17, MED18, MED19, MED20, MED21, MED22, MED23, MED24, MED25, MED26, MED27, MED29, MED30, MED31, CCNC, CDK8 and CDC2L6/CDK11. The MED12, MED13, CCNC and CDK8 subunits form a distinct module termed the CDK8 module. Mediator containing the CDK8 module is less active than Mediator lacking this module in supporting transcriptional activation. Individual preparations of the Mediator complex lacking one or more distinct subunits have been variously termed ARC, CRSP, DRIP, PC2, SMCC and TRAP. Associates with the MED18/MED20 heteromer.

Its subcellular location is the nucleus. Component of the Mediator complex, a coactivator involved in the regulated transcription of nearly all RNA polymerase II-dependent genes. Mediator functions as a bridge to convey information from gene-specific regulatory proteins to the basal RNA polymerase II transcription machinery. Mediator is recruited to promoters by direct interactions with regulatory proteins and serves as a scaffold for the assembly of a functional preinitiation complex with RNA polymerase II and the general transcription factors. The polypeptide is Mediator of RNA polymerase II transcription subunit 29 (Med29) (Mus musculus (Mouse)).